Consider the following 755-residue polypeptide: MSTCSSSEIAEKKRIALAKLQAKKSQLLASAPATNGKSTTSATGATQHANNGKSNPNQPQAKSPLNFYRSPTGEQKKINRSGPTPGDNKSSSFLNALKAIKQTSNRELSRGAAHPYQRPNGGNERNKPTLSLSSDKEKPVAVLLGNSITCNLYLISTHRFAAQTSGYHEQLVTVFKNMPTKCYDGQTRIWSFDLSDYQSLKTHAADLKPYVHMNGIPKKVLDLCGQPPVVPERSVLASIEPKLADQLMPFQQDGVCFAIAQKGRIMICDEMGLGKTYQALAVADYFKDDWPLLVCTTASTRDSWAKHIMDLLPKVPIHYVQVLNNNQLYVGEAKVLITSYNMMERHEDKLMQRKFGFIIFDESHTLKNSKAKCTTTAKRLTDQAKRVVLLSGTPALSRPLELFTQLQMIDGKFMNFMEFTTRYCDGKQSTFGWDANGQSNLEELKVILHLKYMLRRTKVEVLPQLAEKNRETVVLDPALVWTNAETKETLDAFNKELKTAKGRATEEILLRFYARTAEVKTRAVCAYLKTLVKEQKKFIIFAHHRVMMDAISDFLSGLKVHYIRIDGQTRSDHRSDSVDTFQKKSSCKVALLSLKACNSGITLTAAEIIVFAELDWNPSTLAQAESRAHRIGQTKPVICRYLIAHNTADDIIWNMLKNKQEVLSKVGIFAENLQKATHTAAPTSSHKIEEYFSPSTSTSLEPERNSIKQYFSTIPAKEPPEQNNNTEMTKVNKAESDIAAFFNDDDDEAFLELDI.

Positions 7 to 27 (SEIAEKKRIALAKLQAKKSQL) form a coiled coil. 2 disordered regions span residues 26–91 (QLLA…NKSS) and 104–134 (SNRE…SLSS). Over residues 32 to 63 (PATNGKSTTSATGATQHANNGKSNPNQPQAKS) the composition is skewed to polar residues. The residue at position 63 (serine 63) is a Phosphoserine. Residues 139 to 217 (PVAVLLGNSI…KPYVHMNGIP (79 aa)) form the HARP domain. Residues 256–412 (CFAIAQKGRI…FTQLQMIDGK (157 aa)) enclose the Helicase ATP-binding domain. ATP is bound at residue 269–276 (DEMGLGKT). The DESH box motif lies at 361–364 (DESH). Residues 527–681 (YLKTLVKEQK…NLQKATHTAA (155 aa)) form the Helicase C-terminal domain.

This sequence belongs to the SNF2/RAD54 helicase family. SMARCAL1 subfamily.

Its subcellular location is the nucleus. In terms of biological role, ATP-dependent annealing helicase that catalyzes the rewinding of the stably unwound DNA. The protein is SWI/SNF-related matrix-associated actin-dependent regulator of chromatin subfamily A-like protein 1 (Marcal1) of Drosophila melanogaster (Fruit fly).